The primary structure comprises 900 residues: Alanine--tRNA ligase (900 aa).

Histidine 604, histidine 608, cysteine 708, and histidine 712 together coordinate Zn(2+).

It belongs to the class-II aminoacyl-tRNA synthetase family. Zn(2+) is required as a cofactor.

It is found in the cytoplasm. It carries out the reaction tRNA(Ala) + L-alanine + ATP = L-alanyl-tRNA(Ala) + AMP + diphosphate. Its function is as follows. Catalyzes the attachment of alanine to tRNA(Ala) in a two-step reaction: alanine is first activated by ATP to form Ala-AMP and then transferred to the acceptor end of tRNA(Ala). Also edits incorrectly charged Ser-tRNA(Ala) and Gly-tRNA(Ala) via its editing domain. This Saccharolobus islandicus (strain Y.G.57.14 / Yellowstone #1) (Sulfolobus islandicus) protein is Alanine--tRNA ligase.